A 522-amino-acid polypeptide reads, in one-letter code: Peptide chain release factor 3 (522 aa).

A tr-type G domain is found at 10–277 (ASRKTFAIIS…TFVDFAPSPS (268 aa)). Residues 19–26 (SHPDAGKT), 87–91 (DTPGH), and 141–144 (NKMD) each bind GTP.

The protein belongs to the TRAFAC class translation factor GTPase superfamily. Classic translation factor GTPase family. PrfC subfamily.

It is found in the cytoplasm. Functionally, increases the formation of ribosomal termination complexes and stimulates activities of RF-1 and RF-2. It binds guanine nucleotides and has strong preference for UGA stop codons. It may interact directly with the ribosome. The stimulation of RF-1 and RF-2 is significantly reduced by GTP and GDP, but not by GMP. The sequence is that of Peptide chain release factor 3 from Listeria monocytogenes serotype 4b (strain CLIP80459).